The sequence spans 427 residues: Anaerobic glycerol-3-phosphate dehydrogenase subunit B (427 aa).

The protein belongs to the anaerobic G-3-P dehydrogenase subunit B family. Composed of a catalytic GlpA/B dimer and of membrane bound GlpC. Requires FMN as cofactor.

The catalysed reaction is a quinone + sn-glycerol 3-phosphate = dihydroxyacetone phosphate + a quinol. Its pathway is polyol metabolism; glycerol degradation via glycerol kinase pathway; glycerone phosphate from sn-glycerol 3-phosphate (anaerobic route): step 1/1. In terms of biological role, conversion of glycerol 3-phosphate to dihydroxyacetone. Uses fumarate or nitrate as electron acceptor. The chain is Anaerobic glycerol-3-phosphate dehydrogenase subunit B from Glaesserella parasuis serovar 5 (strain SH0165) (Haemophilus parasuis).